The following is a 261-amino-acid chain: Pyridoxine-5'-phosphate oxidase (261 aa).

42-45 (RGDP) is a binding site for pyridoxal 5'-phosphate. An FMN-binding site is contributed by 95–98 (RMVL). A pyridoxal 5'-phosphate-binding site is contributed by lysine 100. Residues 110–111 (FT), 116–117 (RK), and glutamine 139 contribute to the FMN site. Residues tyrosine 157, arginine 161, and serine 165 each contribute to the pyridoxal 5'-phosphate site. Residues 174–175 (QS) and tryptophan 219 each bind FMN. 225–227 (RLH) contacts pyridoxal 5'-phosphate. Arginine 229 provides a ligand contact to FMN. Phosphothreonine is present on threonine 238. Serine 241 bears the Phosphoserine mark.

The protein belongs to the pyridoxamine 5'-phosphate oxidase family. Homodimer. Requires FMN as cofactor.

It carries out the reaction pyridoxamine 5'-phosphate + O2 + H2O = pyridoxal 5'-phosphate + H2O2 + NH4(+). The catalysed reaction is pyridoxine 5'-phosphate + O2 = pyridoxal 5'-phosphate + H2O2. It functions in the pathway cofactor metabolism; pyridoxal 5'-phosphate salvage; pyridoxal 5'-phosphate from pyridoxamine 5'-phosphate: step 1/1. Its pathway is cofactor metabolism; pyridoxal 5'-phosphate salvage; pyridoxal 5'-phosphate from pyridoxine 5'-phosphate: step 1/1. Functionally, catalyzes the oxidation of either pyridoxine 5'-phosphate (PNP) or pyridoxamine 5'-phosphate (PMP) into pyridoxal 5'-phosphate (PLP). The polypeptide is Pyridoxine-5'-phosphate oxidase (PNPO) (Bos taurus (Bovine)).